The chain runs to 199 residues: Superoxide dismutase [Mn/Fe] 2 (199 aa).

The Fe(3+) site is built by histidine 27, histidine 81, aspartate 161, and histidine 165. Residues histidine 27, histidine 81, aspartate 161, and histidine 165 each coordinate Mn(2+).

This sequence belongs to the iron/manganese superoxide dismutase family. As to quaternary structure, homodimer. Can also form a heterodimer with SodA. It depends on Mn(2+) as a cofactor. Fe(3+) is required as a cofactor.

The catalysed reaction is 2 superoxide + 2 H(+) = H2O2 + O2. Functionally, destroys superoxide anion radicals which are normally produced within the cells and which are toxic to biological systems. Catalyzes the dismutation of superoxide anion radicals into O2 and H2O2 by successive reduction and oxidation of the transition metal ion at the active site. The sequence is that of Superoxide dismutase [Mn/Fe] 2 (sodM) from Staphylococcus aureus (strain USA300).